The primary structure comprises 189 residues: Glycerol-3-phosphate acyltransferase (189 aa).

5 consecutive transmembrane segments (helical) span residues 1–21 (MFWS…AIVL), 50–70 (KLAI…VLLA), 81–101 (AWVG…RFQG), 111–131 (MLMA…VLTF), and 151–171 (LLAW…LMIV).

Belongs to the PlsY family. Probably interacts with PlsX.

The protein localises to the cell inner membrane. The enzyme catalyses an acyl phosphate + sn-glycerol 3-phosphate = a 1-acyl-sn-glycero-3-phosphate + phosphate. Its pathway is lipid metabolism; phospholipid metabolism. Functionally, catalyzes the transfer of an acyl group from acyl-phosphate (acyl-PO(4)) to glycerol-3-phosphate (G3P) to form lysophosphatidic acid (LPA). This enzyme utilizes acyl-phosphate as fatty acyl donor, but not acyl-CoA or acyl-ACP. The sequence is that of Glycerol-3-phosphate acyltransferase from Pseudomonas entomophila (strain L48).